Reading from the N-terminus, the 483-residue chain is tRNA sulfurtransferase (483 aa).

A THUMP domain is found at 61–165 (AEVLEILTTT…DELLNQVIAR (105 aa)). ATP-binding positions include 183–184 (LI), K265, G287, and Q296. A disulfide bond links C344 and C457. In terms of domain architecture, Rhodanese spans 405–483 (EEGNAVVLDI…GFNNVKVYRP (79 aa)). Residue C457 is the Cysteine persulfide intermediate of the active site.

Belongs to the ThiI family.

Its subcellular location is the cytoplasm. The enzyme catalyses [ThiI sulfur-carrier protein]-S-sulfanyl-L-cysteine + a uridine in tRNA + 2 reduced [2Fe-2S]-[ferredoxin] + ATP + H(+) = [ThiI sulfur-carrier protein]-L-cysteine + a 4-thiouridine in tRNA + 2 oxidized [2Fe-2S]-[ferredoxin] + AMP + diphosphate. It carries out the reaction [ThiS sulfur-carrier protein]-C-terminal Gly-Gly-AMP + S-sulfanyl-L-cysteinyl-[cysteine desulfurase] + AH2 = [ThiS sulfur-carrier protein]-C-terminal-Gly-aminoethanethioate + L-cysteinyl-[cysteine desulfurase] + A + AMP + 2 H(+). It functions in the pathway cofactor biosynthesis; thiamine diphosphate biosynthesis. Its function is as follows. Catalyzes the ATP-dependent transfer of a sulfur to tRNA to produce 4-thiouridine in position 8 of tRNAs, which functions as a near-UV photosensor. Also catalyzes the transfer of sulfur to the sulfur carrier protein ThiS, forming ThiS-thiocarboxylate. This is a step in the synthesis of thiazole, in the thiamine biosynthesis pathway. The sulfur is donated as persulfide by IscS. In Vibrio cholerae serotype O1 (strain ATCC 39315 / El Tor Inaba N16961), this protein is tRNA sulfurtransferase.